Reading from the N-terminus, the 505-residue chain is Maturase K (505 aa).

Belongs to the intron maturase 2 family. MatK subfamily.

The protein localises to the plastid. The protein resides in the chloroplast. Its function is as follows. Usually encoded in the trnK tRNA gene intron. Probably assists in splicing its own and other chloroplast group II introns. In Gomphrena haageana (Haage's globe-amaranth), this protein is Maturase K.